A 56-amino-acid chain; its full sequence is Large ribosomal subunit protein bL32 (56 aa).

Positions Met1–Arg39 are disordered. Positions Lys7 to Arg16 are enriched in basic residues. The span at Ser21–Ala31 shows a compositional bias: polar residues.

The protein belongs to the bacterial ribosomal protein bL32 family.

In Shewanella piezotolerans (strain WP3 / JCM 13877), this protein is Large ribosomal subunit protein bL32.